Here is a 543-residue protein sequence, read N- to C-terminus: Heparanase (543 aa).

Residues 1-35 (MLLRSKPALPPPLMLLLLGPLGPLSPGALPRPAQA) form the signal peptide. Heparan sulfate group is bound by residues 62-64 (DAN) and Thr-97. The propeptide at 110 to 157 (STFEERSYWQSQVNQDICKYGSIPPDVEEKLRLEWPYQEQLLLREHYQ) is linker peptide. Cys-127 and Cys-179 are disulfide-bonded. 158 to 162 (KKFKN) contributes to the heparan sulfate group binding site. Residues Asn-162, Asn-178, Asn-200, and Asn-217 are each glycosylated (N-linked (GlcNAc...) asparagine). Glu-225 serves as the catalytic Proton donor. N-linked (GlcNAc...) asparagine glycosylation occurs at Asn-238. Heparan sulfate group is bound by residues 270 to 280 (QPRRKTAKMLK), His-296, and Arg-303. Residues 288–417 (EVIDSVTWHH…LLFKKLVGTK (130 aa)) form a required for heterodimerization with the heparanase 8 kDa subunit region. Glu-343 serves as the catalytic Nucleophile. Heparan sulfate group is bound by residues 348-350 (YGG) and 389-391 (GNY). Cys-437 and Cys-542 are joined by a disulfide. Residue Asn-459 is glycosylated (N-linked (GlcNAc...) asparagine). Residues 527-543 (FSYSFFVIRNAKVAACI) are required for transferring proheparanase to the Golgi apparatus, secretion and subsequent enzyme activity and for enhancement of PKB/AKT1 phosphorylation.

Belongs to the glycosyl hydrolase 79 family. Heterodimer; heterodimer formation between the 8 kDa and the 50 kDa subunits is required for enzyme activity. Interacts with TF; the interaction, inhibited by heparin, enhances the generation of activated factor X and activates coagulation. Interacts with HRG; the interaction is enhanced at acidic pH, partially inhibits binding of HPSE to cell surface receptors and modulates its enzymatic activity. Interacts with SDC1; the interaction enhances the shedding of SDC1. Interacts with HPSE2. Post-translationally, proteolytically processed. The cleavage of the 65 kDa form leads to the generation of a linker peptide, and 8 kDa and 50 kDa products. The active form, the 8/50 kDa heterodimer, is resistant to degradation. Complete removal of the linker peptide appears to be a prerequisite to the complete activation of the enzyme. In terms of processing, N-glycosylated. Glycosylation of the 50 kDa subunit appears to be essential for its solubility. In terms of tissue distribution, highly expressed in placenta and spleen and weakly expressed in lymph node, thymus, peripheral blood leukocytes, bone marrow, endothelial cells, fetal liver and tumor tissues. Also expressed in hair follicles, specifically in both Henle's and Huxley's layers of inner the root sheath (IRS) at anagen phase.

It is found in the lysosome membrane. The protein localises to the secreted. Its subcellular location is the nucleus. The catalysed reaction is endohydrolysis of (1-&gt;4)-beta-D-glycosidic bonds of heparan sulfate chains in heparan sulfate proteoglycan.. Its activity is regulated as follows. Inhibited by EDTA, laminarin sulfate and, to a lower extent, by heparin and sulfamin and activated by calcium and magnesium. In terms of biological role, endoglycosidase that cleaves heparan sulfate proteoglycans (HSPGs) into heparan sulfate side chains and core proteoglycans. Participates in extracellular matrix (ECM) degradation and remodeling. Selectively cleaves the linkage between a glucuronic acid unit and an N-sulfo glucosamine unit carrying either a 3-O-sulfo or a 6-O-sulfo group. Can also cleave the linkage between a glucuronic acid unit and an N-sulfo glucosamine unit carrying a 2-O-sulfo group, but not linkages between a glucuronic acid unit and a 2-O-sulfated iduronic acid moiety. It is essentially inactive at neutral pH but becomes active under acidic conditions such as during tumor invasion and in inflammatory processes. Facilitates cell migration associated with metastasis, wound healing and inflammation. Enhances shedding of syndecans, and increases endothelial invasion and angiogenesis in myelomas. Acts as a procoagulant by increasing the generation of activation factor X in the presence of tissue factor and activation factor VII. Increases cell adhesion to the extracellular matrix (ECM), independent of its enzymatic activity. Induces AKT1/PKB phosphorylation via lipid rafts increasing cell mobility and invasion. Heparin increases this AKT1/PKB activation. Regulates osteogenesis. Enhances angiogenesis through up-regulation of SRC-mediated activation of VEGF. Implicated in hair follicle inner root sheath differentiation and hair homeostasis. This Homo sapiens (Human) protein is Heparanase (HPSE).